Here is a 253-residue protein sequence, read N- to C-terminus: Ribonuclease HII (253 aa).

In terms of domain architecture, RNase H type-2 spans 70–253 (NLIAGIDEVG…KSFEPIKSML (184 aa)). Residues Asp-76, Glu-77, and Asp-168 each coordinate a divalent metal cation.

The protein belongs to the RNase HII family. Mn(2+) is required as a cofactor. Mg(2+) serves as cofactor.

The protein localises to the cytoplasm. The catalysed reaction is Endonucleolytic cleavage to 5'-phosphomonoester.. Endonuclease that specifically degrades the RNA of RNA-DNA hybrids. In Streptococcus agalactiae serotype III (strain NEM316), this protein is Ribonuclease HII.